The sequence spans 252 residues: MILHAQAKHGKPGLPWLVFLHGFSGDCHEWQEVGEAFADYSRLYVDLPGHGGSAAISVDGFDDVTDLLRKTLVSYNILDFWLVGYSLGGRVAMMAACQGLAGLCGVIVEGGHPGLQNAEQRAERQRSDRQWAQRFRTEPLTAVFADWYQQPVFASLNDDQRRELVALRSNNNGATLAAMLEATSLAVQPDLRANLSARTFAFYYLCGERDSKFRALAAELAADCHVIPRAGHNAHRENPAGVIASLAQILRF.

The protein belongs to the AB hydrolase superfamily. MenH family. In terms of assembly, monomer.

It catalyses the reaction 5-enolpyruvoyl-6-hydroxy-2-succinyl-cyclohex-3-ene-1-carboxylate = (1R,6R)-6-hydroxy-2-succinyl-cyclohexa-2,4-diene-1-carboxylate + pyruvate. Its pathway is quinol/quinone metabolism; 1,4-dihydroxy-2-naphthoate biosynthesis; 1,4-dihydroxy-2-naphthoate from chorismate: step 3/7. It functions in the pathway quinol/quinone metabolism; menaquinone biosynthesis. Its function is as follows. Catalyzes a proton abstraction reaction that results in 2,5-elimination of pyruvate from 2-succinyl-5-enolpyruvyl-6-hydroxy-3-cyclohexene-1-carboxylate (SEPHCHC) and the formation of 2-succinyl-6-hydroxy-2,4-cyclohexadiene-1-carboxylate (SHCHC). The chain is 2-succinyl-6-hydroxy-2,4-cyclohexadiene-1-carboxylate synthase from Shigella boydii serotype 4 (strain Sb227).